The primary structure comprises 1140 residues: DNA damage-binding protein 1 (1140 aa).

This sequence belongs to the DDB1 family. As to quaternary structure, component of the UV-DDB complex which includes DDB1 and DDB2; the heterodimer dimerizes to give rise to a heterotetramer when bound to damaged DNA. The UV-DDB complex interacts with monoubiquitinated histone H2A and binds to XPC via the DDB2 subunit. Component of numerous DCX (DDB1-CUL4-X-box) E3 ubiquitin-protein ligase complexes which consist of a core of DDB1, CUL4A or CUL4B and RBX1. DDB1 may recruit specific substrate targeting subunits to the DCX complex. These substrate targeting subunits are generally known as DCAF (DDB1- and CUL4-associated factor) or CDW (CUL4-DDB1-associated WD40-repeat) proteins. Interacts with Fbw5 and gig. May interact with ohgt.

It is found in the cytoplasm. It localises to the nucleus. Its pathway is protein modification; protein ubiquitination. Its function is as follows. Protein, which is both involved in DNA repair and protein ubiquitination, as part of the UV-DDB complex and DCX (DDB1-CUL4-X-box) complexes, respectively. Core component of the UV-DDB complex (UV-damaged DNA-binding protein complex), a complex that recognizes UV-induced DNA damage and recruit proteins of the nucleotide excision repair pathway (the NER pathway) to initiate DNA repair. The UV-DDB complex preferentially binds to cyclobutane pyrimidine dimers (CPD), 6-4 photoproducts (6-4 PP), apurinic sites and short mismatches. Also functions as a component of numerous distinct DCX (DDB1-CUL4-X-box) E3 ubiquitin-protein ligase complexes which mediate the ubiquitination and subsequent proteasomal degradation of target proteins. The functional specificity of the DCX E3 ubiquitin-protein ligase complex is determined by the variable substrate recognition component recruited by DDB1. Required for degradation of gig. Required for genomic stability in the face of endogenous DNA lesions and for the response to MMS-induced DNA damage. Required for normal wing development. The chain is DNA damage-binding protein 1 (pic) from Drosophila melanogaster (Fruit fly).